A 256-amino-acid chain; its full sequence is uncharacterized protein (256 aa).

A signal peptide spans 1-22 (MGYLKRIGMCISLLIVIIFVTS). Cysteine 23 carries the N-palmitoyl cysteine lipid modification. Cysteine 23 carries the S-diacylglycerol cysteine lipid modification.

This sequence belongs to the staphylococcal tandem lipoprotein family.

It localises to the cell membrane. This is an uncharacterized protein from Staphylococcus aureus (strain MSSA476).